The primary structure comprises 325 residues: Putative aryl-alcohol dehydrogenase C750.01 (325 aa).

Belongs to the aldo/keto reductase family. Aldo/keto reductase 2 subfamily.

This is Putative aryl-alcohol dehydrogenase C750.01 from Schizosaccharomyces pombe (strain 972 / ATCC 24843) (Fission yeast).